Reading from the N-terminus, the 330-residue chain is Type II methyltransferase M.MthTI (330 aa).

One can recognise an SAM-dependent MTase C5-type domain in the interval methionine 3 to valine 328. Cysteine 73 is a catalytic residue.

The protein belongs to the class I-like SAM-binding methyltransferase superfamily. C5-methyltransferase family.

The enzyme catalyses a 2'-deoxycytidine in DNA + S-adenosyl-L-methionine = a 5-methyl-2'-deoxycytidine in DNA + S-adenosyl-L-homocysteine + H(+). Its function is as follows. A methylase that recognizes the double-stranded sequence 5'-GGCC-3', methylates C-3 on both strands, and protects the DNA from cleavage by the MthTI endonuclease. This Methanothermobacter thermautotrophicus (Methanobacterium thermoformicicum) protein is Type II methyltransferase M.MthTI (mthTIM).